The primary structure comprises 176 residues: ATP-dependent protease subunit HslV (176 aa).

The active site involves Thr-5. Positions 161, 164, and 167 each coordinate Na(+).

This sequence belongs to the peptidase T1B family. HslV subfamily. In terms of assembly, a double ring-shaped homohexamer of HslV is capped on each side by a ring-shaped HslU homohexamer. The assembly of the HslU/HslV complex is dependent on binding of ATP.

The protein localises to the cytoplasm. It catalyses the reaction ATP-dependent cleavage of peptide bonds with broad specificity.. Its activity is regulated as follows. Allosterically activated by HslU binding. Its function is as follows. Protease subunit of a proteasome-like degradation complex believed to be a general protein degrading machinery. The polypeptide is ATP-dependent protease subunit HslV (Caldicellulosiruptor saccharolyticus (strain ATCC 43494 / DSM 8903 / Tp8T 6331)).